Here is a 312-residue protein sequence, read N- to C-terminus: Glyoxylate/hydroxypyruvate reductase A (312 aa).

The active site involves Arg-227. Catalysis depends on His-275, which acts as the Proton donor.

This sequence belongs to the D-isomer specific 2-hydroxyacid dehydrogenase family. GhrA subfamily.

It localises to the cytoplasm. The enzyme catalyses glycolate + NADP(+) = glyoxylate + NADPH + H(+). It catalyses the reaction (R)-glycerate + NAD(+) = 3-hydroxypyruvate + NADH + H(+). It carries out the reaction (R)-glycerate + NADP(+) = 3-hydroxypyruvate + NADPH + H(+). Functionally, catalyzes the NADPH-dependent reduction of glyoxylate and hydroxypyruvate into glycolate and glycerate, respectively. In Shigella dysenteriae serotype 1 (strain Sd197), this protein is Glyoxylate/hydroxypyruvate reductase A.